We begin with the raw amino-acid sequence, 393 residues long: MALNINGVSLKSHKMLPFPCSSARSERVFMASTIHRPSVEVGSVKKAFTPPREVHVQVTHSMPPEKIEVFDSLRDWAAQNLLVHLKPVEKCWQPTDFLPDPASEGFDEQVKELRERCKEIPDDYFVVLIGDMITEEALPTYQTMINTLDGVRDETGATVTPWAIWTRAWTAEENRHGDLLNKYLYLSGRVDMKQIEKTIQYLIGSGMDPRTENNPYLGFVYTSLRKGVTFVSHGNTARLAKEHGDMKLAQICGSIAADEKRHETAYTKIVEKLLEVDPDGAVLAIGDMMRKNISMPAHLMYDGRDDNLFEHFSAVAQRLGVYTAKDYADILEFHVGRWEVEKLTGLSSEGRRAQDYVCGLAPRIRKLEERAQARAKHAKSVPFSWIFGKEIKL.

The transit peptide at 1-30 (MALNINGVSLKSHKMLPFPCSSARSERVFM) directs the protein to the chloroplast. Glu-135, Glu-173, His-176, Glu-259, and His-262 together coordinate Fe cation.

This sequence belongs to the fatty acid desaturase type 2 family. As to quaternary structure, homodimer. Requires Fe(2+) as cofactor.

Its subcellular location is the plastid. The protein resides in the chloroplast. It catalyses the reaction octadecanoyl-[ACP] + 2 reduced [2Fe-2S]-[ferredoxin] + O2 + 2 H(+) = (9Z)-octadecenoyl-[ACP] + 2 oxidized [2Fe-2S]-[ferredoxin] + 2 H2O. Its pathway is lipid metabolism; fatty acid metabolism. Functionally, converts stearoyl-ACP to oleoyl-ACP by introduction of a cis double bond between carbons 9 and 10 of the acyl chain. The polypeptide is Stearoyl-[acyl-carrier-protein] 9-desaturase, chloroplastic (Solanum tuberosum (Potato)).